We begin with the raw amino-acid sequence, 423 residues long: Tyrosine--tRNA ligase (423 aa).

Position 35 (tyrosine 35) interacts with L-tyrosine. A 'HIGH' region motif is present at residues proline 40–histidine 49. L-tyrosine is bound by residues tyrosine 170 and glutamine 174. The 'KMSKS' region signature appears at lysine 230–serine 234. Lysine 233 contacts ATP. Residues aspartate 355–glycine 412 form the S4 RNA-binding domain.

This sequence belongs to the class-I aminoacyl-tRNA synthetase family. TyrS type 1 subfamily. In terms of assembly, homodimer.

It is found in the cytoplasm. It carries out the reaction tRNA(Tyr) + L-tyrosine + ATP = L-tyrosyl-tRNA(Tyr) + AMP + diphosphate + H(+). In terms of biological role, catalyzes the attachment of tyrosine to tRNA(Tyr) in a two-step reaction: tyrosine is first activated by ATP to form Tyr-AMP and then transferred to the acceptor end of tRNA(Tyr). This Mycobacterium sp. (strain KMS) protein is Tyrosine--tRNA ligase.